Here is a 641-residue protein sequence, read N- to C-terminus: Calpain-6 (641 aa).

Residues Leu26–Val343 enclose the Calpain catalytic domain. The tract at residues Asn344 to Arg495 is domain III. The 124-residue stretch at Thr498 to Ala621 folds into the C2 domain.

This sequence belongs to the peptidase C2 family. As to quaternary structure, interacts (via domain III) with microtubules. Interacts (via domain II) with ARHGEF2 (via the N-terminal zinc finger).

The protein resides in the cytoplasm. It is found in the perinuclear region. Its subcellular location is the cytoskeleton. It localises to the spindle. Microtubule-stabilizing protein that may be involved in the regulation of microtubule dynamics and cytoskeletal organization. May act as a regulator of RAC1 activity through interaction with ARHGEF2 to control lamellipodial formation and cell mobility. Does not seem to have protease activity as it has lost the active site residues. The chain is Calpain-6 (Capn6) from Mus musculus (Mouse).